The following is a 184-amino-acid chain: Chaperone protein dnaJ 72 (184 aa).

The J domain occupies 3–73 (DHYQVLGVTR…LKRASYNAGS (71 aa)). Residues 133–150 (FLLNLALAGGLYFAFTAI) traverse the membrane as a helical segment.

It belongs to the DnaJ family. C/III subfamily.

The protein resides in the membrane. In terms of biological role, plays a continuous role in plant development probably in the structural organization of compartments. The chain is Chaperone protein dnaJ 72 (ATJ72) from Arabidopsis thaliana (Mouse-ear cress).